We begin with the raw amino-acid sequence, 608 residues long: Coilin (608 aa).

The segment at 134–272 (KETGGYESES…RKKAKRQWLR (139 aa)) is disordered. Acidic residues predominate over residues 141 to 155 (SESEEDELEEEAEEF). Residues 161–179 (ASKKRKTSSKNQSTKRKKC) show a composition bias toward basic residues. Positions 163-170 (KKRKTSSK) match the Nuclear localization signal 1 motif. Position 187 is a phosphoserine (Ser-187). The segment covering 211-228 (DVQSANNDEQNNDSTKPM) has biased composition (polar residues). Residues 235 to 245 (SQQEESKEHND) show a composition bias toward basic and acidic residues. Positions 253 to 260 (TKKTPSRS) match the Nuclear localization signal 2 motif. Positions 256-269 (TPSRSARRKKAKRQ) are enriched in basic residues. Residues 410-510 (YEQLVAYTGS…LLDVRSVKTS (101 aa)) enclose the Tudor; atypical domain. Positions 513-585 (DSAEVAKSAL…KKGSSSGGSW (73 aa)) are disordered. The span at 558 to 585 (EALSAKKAALSQANNGWNKKGSSSGGSW) shows a compositional bias: low complexity.

It belongs to the coilin family. In terms of assembly, homooligomer. Interaction with RNA results in multimerization due to structural alteration in the NOD domain.

Its subcellular location is the nucleus. The protein resides in the cajal body. Its function is as follows. Probable component of nuclear coiled bodies, also known as Cajal bodies or CBs, which are involved in the modification and assembly of nucleoplasmic snRNPs. Required for CBs formation. Binds snRNAs and non-specific artificial RNA via the N-terminal part of the NOD domain and via the NLS2 region (212-282) of the IDD domain. The two sites are able to function independently and provide effective RNA-binding in a non-cooperative manner. The polypeptide is Coilin (Arabidopsis thaliana (Mouse-ear cress)).